A 2333-amino-acid chain; its full sequence is Genome polyprotein (2333 aa).

Positions 1–201 constitute a Peptidase C28 domain; the sequence is MNTTNCFIAL…WKANVQRKLK (201 aa). The Cytoplasmic segment spans residues 1–1481; sequence MNTTNCFIAL…SFVKRAFKRL (1481 aa). Active-site for leader protease activity residues include Cys-51, His-148, and Asp-163. Disordered stretches follow at residues 199 to 218 and 238 to 265; these read KLKGAGQSSPATGSQNQSGN and QLGDNAISGGSNEGSTDTTSTHTTNTQN. Residue Gly-202 is the site of N-myristoyl glycine; by host attachment. 2 stretches are compositionally biased toward polar residues: residues 204-218 and 238-251; these read GQSSPATGSQNQSGN and QLGDNAISGGSNEG. The segment covering 252–265 has biased composition (low complexity); the sequence is STDTTSTHTTNTQN. The tract at residues 789–797 is antigenic epitope; that stretch reads ALLRAATYY. Residues 869 to 871 carry the Cell attachment site motif; that stretch reads RGD. The region spanning 1190 to 1354 is the SF3 helicase domain; the sequence is NVHIANLCKV…DGYKINNKLD (165 aa). An ATP-binding site is contributed by 1218–1225; it reads GKSGQGKS. Residues 1482 to 1502 lie within the membrane without spanning it; it reads KENFEIVALCLTLLANIVIMI. Residues 1503 to 2333 lie on the Cytoplasmic side of the membrane; it reads RETRKRQKMV…RWVNAVCGDA (831 aa). The interval 1562-1589 is disordered; it reads NDVNSEPARPAEEQPQAEGPYTGPLERQ. An O-(5'-phospho-RNA)-tyrosine mark is found at Tyr-1582, Tyr-1605, and Tyr-1629. One can recognise a Peptidase C3 domain in the interval 1653–1849; it reads APPTDLQKMV…YCSCVSRSML (197 aa). Residue His-1696 is the For protease 3C activity; Proton donor/acceptor of the active site. Residues Asp-1734 and Cys-1813 each act as for protease 3C activity in the active site. A Nuclear localization signal motif is present at residues 1879–1887; sequence MRKTKLAPT. A RdRp catalytic domain is found at 2097 to 2215; the sequence is RNVWDVDYSA…ASDYDLDFEA (119 aa). Residue Gly-2200 is the For RdRp activity of the active site.

Belongs to the picornaviruses polyprotein family. As to quaternary structure, interacts with host ISG15. In terms of assembly, interacts (via R-G-D motif) with host ITGAV/ITGB6. Interacts with host MAVS; this interaction inhibits binding of host TRAF3 to MAVS, thereby suppressing interferon-mediated responses. Forms homooligomers. As to quaternary structure, homohexamer. Interacts with host VIM. Interacts with host BECN1. In terms of assembly, interacts with host DCTN3. Interacts with RNA-dependent RNA polymerase; this interaction allows 3B-1 to binds 2 polymerases and act as a primer. It also allows the recruitment of the RNA-dependent RNA polymerase to host membranes. As to quaternary structure, interacts with RNA-dependent RNA polymerase; this interaction allows 3B-2 to act as a primer. In terms of assembly, interacts with RNA-dependent RNA polymerase; this interaction allows 3B-3 to act as a primer. Interacts with 3B-1; this interaction allows 3B-1 to binds 2 polymerases and act as a primer. It also allows the recruitment of the RNA-dependent RNA polymerase to host membranes. Interacts with 3B-2; this interaction allows 3B-2 to act as a primer. Interacts with 3B-3; this interaction allows 3B-3 to act as a primer. Removes six residues from its own C-terminus, generating sLb(pro). Post-translationally, specific enzymatic cleavages in vivo by the viral proteases yield a variety of precursors and mature proteins. The polyprotein seems to be cotranslationally cleaved at the 2A/2B junction by a ribosomal skip from one codon to the next without formation of a peptide bond. This process would release the L-P1-2A peptide from the translational complex. In terms of processing, during virion maturation, immature virions are rendered infectious following cleavage of VP0 into VP4 and VP2. This maturation seems to be an autocatalytic event triggered by the presence of RNA in the capsid and is followed by a conformational change of the particle. Myristoylation is required during RNA encapsidation and formation of the mature virus particle. Post-translationally, uridylylated by the polymerase and covalently linked to the 5'-end of genomic RNA. These uridylylated forms act as a nucleotide-peptide primer for the polymerase.

It is found in the host nucleus. The protein localises to the host cytoplasm. The protein resides in the virion. Its subcellular location is the host endoplasmic reticulum membrane. It localises to the host cytoplasmic vesicle membrane. The enzyme catalyses Autocatalytically cleaves itself from the polyprotein of the foot-and-mouth disease virus by hydrolysis of a Lys-|-Gly bond, but then cleaves host cell initiation factor eIF-4G at bonds -Gly-|-Arg- and -Lys-|-Arg-.. It carries out the reaction a ribonucleoside 5'-triphosphate + H2O = a ribonucleoside 5'-diphosphate + phosphate + H(+). The catalysed reaction is RNA(n) + a ribonucleoside 5'-triphosphate = RNA(n+1) + diphosphate. It catalyses the reaction Selective cleavage of Gln-|-Gly bond in the poliovirus polyprotein. In other picornavirus reactions Glu may be substituted for Gln, and Ser or Thr for Gly.. Functionally, autocatalytically cleaves itself from the polyprotein at the L/VP0 junction. Also cleaves the host translation initiation factors EIF4G1 and EIF4G3, in order to shut off the capped cellular mRNA transcription. Plays a role in counteracting host innate antiviral response using diverse mechanisms. Possesses a deubiquitinase activity acting on both 'Lys-48' and 'Lys-63'-linked polyubiquitin chains. In turn, inhibits the ubiquitination and subsequent activation of key signaling molecules of type I IFN response such as host RIGI, TBK1, TRAF3 and TRAF6. Inhibits host NF-kappa-B activity by inducing a decrease in RELA mRNA levels. Cleaves a peptide bond in the C-terminus of host ISG15, resulting in the damaging of this modifier that can no longer be attached to target proteins. Also cleaves host G3BP1 and G3BP2 in order to inhibit cytoplasmic stress granules assembly. Its function is as follows. Lies on the inner surface of the capsid shell. After binding to the host receptor, the capsid undergoes conformational changes. Capsid protein VP4 is released, capsid protein VP1 N-terminus is externalized, and together, they shape a pore in the host membrane through which the viral genome is translocated into the host cell cytoplasm. After genome has been released, the channel shrinks. In terms of biological role, forms an icosahedral capsid of pseudo T=3 symmetry with capsid proteins VP1 and VP3. The capsid is composed of 60 copies of each capsid protein organized in the form of twelve pentamers and encloses the viral positive strand RNA genome. Upon acidifcation in the endosome, dissociates into pentamers. Forms an icosahedral capsid of pseudo T=3 symmetry with capsid proteins VP0 and VP3. The capsid is composed of 60 copies of each capsid protein organized in the form of twelve pentamers and encloses the viral positive strand RNA genome. Upon acidifcation in the endosome, dissociates into pentamers. Functionally, forms an icosahedral capsid of pseudo T=3 symmetry with capsid proteins VP2 and VP3. The capsid is composed of 60 copies of each capsid protein organized in the form of twelve pentamers and encloses the viral positive strand RNA genome. Mediates cell entry by attachment to an integrin receptor, usually host ITGAV/ITGB6. In addition, targets host MAVS to suppress type I IFN pathway. Upon acidifcation in the endosome, dissociates into pentamers. Its function is as follows. Mediates self-processing of the polyprotein by a translational effect termed 'ribosome skipping'. Mechanistically, 2A-mediated cleavage occurs between the C-terminal glycine and the proline of the downstream protein 2B. In the case of foot-and-mouth disease virus, the 2A oligopeptide is post-translationally 'trimmed' from the C-terminus of the upstream protein 1D by 3C proteinase. In terms of biological role, plays an essential role in the virus replication cycle by acting as a viroporin. Creates a pore in the host endoplasmic reticulum and as a consequence releases Ca2+ in the cytoplasm of infected cell. In turn, high levels of cytoplasmic calcium may trigger membrane trafficking and transport of viral ER-associated proteins to viroplasms, sites of viral genome replication. Associates with and induces structural rearrangements of intracellular membranes. Triggers host autophagy by interacting with host BECN1 and thereby promotes viral replication. Participates in viral replication and interacts with host DHX9. Displays RNA-binding, nucleotide binding and NTPase activities. May play a role in virion morphogenesis and viral RNA encapsidation by interacting with the capsid protein VP3. Functionally, plays important roles in virus replication, virulence and host range. Its function is as follows. Covalently linked to the 5'-end of both the positive-strand and negative-strand genomic RNAs. Acts as a genome-linked replication primer. In terms of biological role, cysteine protease that generates mature viral proteins from the precursor polyprotein. In addition to its proteolytic activity, binds to viral RNA and thus influences viral genome replication. RNA and substrate bind cooperatively to the protease. RNA-directed RNA polymerase 3D-POL replicates genomic and antigenomic RNA by recognizing replications specific signals. Covalently attaches UMP to a tyrosine of VPg, which is used to prime RNA synthesis. The positive stranded RNA genome is first replicated at virus induced membranous vesicles, creating a dsRNA genomic replication form. This dsRNA is then used as template to synthesize positive stranded RNA genomes. ss(+)RNA genomes are either translated, replicated or encapsidated. This chain is Genome polyprotein, found in Foot-and-mouth disease virus (isolate Bovine/United Kingdom/A12Valle119/1932 serotype A) (FMDV).